The following is a 407-amino-acid chain: Putative colanic acid biosynthesis glycosyl transferase WcaI (407 aa).

The protein operates within slime biogenesis; slime polysaccharide biosynthesis. This Escherichia coli (strain K12) protein is Putative colanic acid biosynthesis glycosyl transferase WcaI (wcaI).